A 433-amino-acid chain; its full sequence is MLSLFNRLPWLHRVLITAFSAIIVFAIFFLPNSEDLRKPDAQREVGRHYPVTLDNQLVSTPEEEVIAPPSVMLRWETYQVANGESAALLFQRAGLSSRVLYELTSSNSDINNQLSKLMPKDELKFGFDKDNQLVQLKRTISPYETFVVTRSDSGFTSEFDKKEVTFQLNYAEAKITSNFWNAGVTAGLSANQIIELANMFGWDIDFALDIREGDQFKLLYQEKIVEGSVIGRGNIIAATFINQGSTFTAILDDNTGNYYDQNGRAMKKAFLRSPLDFRRVSSNFNPRRLHPVTGQIKAHRGTDYVAPVGTPIWAAGDGVVEKSSYNQFNGNYVYIRHSNTYITKYLHLQRRLVKTGERVKQGQTIGTLGGTGRVTGPHLHYEFLVNGIHKNPRTVELPQAQSLTGKAKETFIANAKQRMEKLERYSQLLYANQ.

A helical transmembrane segment spans residues 10-30 (WLHRVLITAFSAIIVFAIFFL). Zn(2+) contacts are provided by His299, Asp303, and His380.

The protein belongs to the peptidase M23B family. Zn(2+) serves as cofactor.

It is found in the cell inner membrane. The protein operates within cell wall degradation; peptidoglycan degradation. Its activity is regulated as follows. Reduced activity in 0.5 mM EDTA and a complete loss of activity at higher EDTA concentrations. In terms of biological role, cell wall peptidoglycan (PG) DD-endopeptidase. Hydrolyzes peptide cross-links which covalently connect adjacent PG strands probably to allow insertion of new glycans and thus cell wall expansion. Degrades purified whole PG sacculi in vitro. The chain is Peptidoglycan DD-endopeptidase ShyC from Vibrio cholerae serotype O1 (strain ATCC 39315 / El Tor Inaba N16961).